The sequence spans 112 residues: DNA-directed RNA polymerase subunit Rpo11 (112 aa).

It belongs to the archaeal Rpo11/eukaryotic RPB11/RPC19 RNA polymerase subunit family. Part of the RNA polymerase complex.

It is found in the cytoplasm. It carries out the reaction RNA(n) + a ribonucleoside 5'-triphosphate = RNA(n+1) + diphosphate. In terms of biological role, DNA-dependent RNA polymerase (RNAP) catalyzes the transcription of DNA into RNA using the four ribonucleoside triphosphates as substrates. This is DNA-directed RNA polymerase subunit Rpo11 from Methanopyrus kandleri (strain AV19 / DSM 6324 / JCM 9639 / NBRC 100938).